Reading from the N-terminus, the 173-residue chain is NADH-ubiquinone oxidoreductase chain 6 (173 aa).

A run of 5 helical transmembrane segments spans residues 1 to 21 (MTYFVMFLGFCFILGAVAVAS), 27 to 47 (YGVLGLVVGSVVGCGWLLSLG), 48 to 68 (VSFISLALFLVYLGGMLVVFV), 87 to 107 (VVIYGVGLVLVVLVGIVVGDF), and 139 to 159 (WGAGLFLVAGWGLLLTLFVVL).

The protein belongs to the complex I subunit 6 family.

It is found in the mitochondrion membrane. It catalyses the reaction a ubiquinone + NADH + 5 H(+)(in) = a ubiquinol + NAD(+) + 4 H(+)(out). Its function is as follows. Core subunit of the mitochondrial membrane respiratory chain NADH dehydrogenase (Complex I) that is believed to belong to the minimal assembly required for catalysis. Complex I functions in the transfer of electrons from NADH to the respiratory chain. The immediate electron acceptor for the enzyme is believed to be ubiquinone. The protein is NADH-ubiquinone oxidoreductase chain 6 (MT-ND6) of Struthio camelus (Common ostrich).